We begin with the raw amino-acid sequence, 207 residues long: Ribonuclease HII (207 aa).

An RNase H type-2 domain is found at 12–205 (GLVVGIDEVG…IRNMIEAEAH (194 aa)). The a divalent metal cation site is built by aspartate 18, glutamate 19, and aspartate 114.

This sequence belongs to the RNase HII family. The cofactor is Mn(2+). It depends on Mg(2+) as a cofactor.

The protein localises to the cytoplasm. It carries out the reaction Endonucleolytic cleavage to 5'-phosphomonoester.. Its function is as follows. Endonuclease that specifically degrades the RNA of RNA-DNA hybrids. The polypeptide is Ribonuclease HII (Gluconobacter oxydans (strain 621H) (Gluconobacter suboxydans)).